The sequence spans 266 residues: Tryptophan synthase alpha chain (266 aa).

Catalysis depends on proton acceptor residues Glu45 and Asp56.

The protein belongs to the TrpA family. Tetramer of two alpha and two beta chains.

The enzyme catalyses (1S,2R)-1-C-(indol-3-yl)glycerol 3-phosphate + L-serine = D-glyceraldehyde 3-phosphate + L-tryptophan + H2O. It participates in amino-acid biosynthesis; L-tryptophan biosynthesis; L-tryptophan from chorismate: step 5/5. The alpha subunit is responsible for the aldol cleavage of indoleglycerol phosphate to indole and glyceraldehyde 3-phosphate. The protein is Tryptophan synthase alpha chain of Novosphingobium aromaticivorans (strain ATCC 700278 / DSM 12444 / CCUG 56034 / CIP 105152 / NBRC 16084 / F199).